Reading from the N-terminus, the 63-residue chain is Beta-defensin 3 (63 aa).

The N-terminal stretch at 1–20 (MRIHYLLFSFLLVLLSPLSA) is a signal peptide. A propeptide spanning residues 21-22 (FS) is cleaved from the precursor. Disulfide bonds link C31–C59, C38–C52, and C42–C60.

Belongs to the beta-defensin family.

It is found in the secreted. In terms of biological role, has bactericidal activity. This is Beta-defensin 3 (Defb3) from Rattus norvegicus (Rat).